A 563-amino-acid chain; its full sequence is MGFTTKIIFLYNLVLVYAGFDDPRKAIELVQKRYGRPCDCSGGQVSEPPSDRVSQVTCSGKTAYLMPDQRWKCKSIPKDTSPSGPLQECPCNSYQSSVHSSCYTSYQQCRSGNKTYYTATLLKTQTGGTSDVQVLGSTNKLIQSPCNGIKGQSICWSTTAPIHVSDGGGPLDTTRIKSVQRKLEEIHKALYPELQYHPLAIPKVRDNLMVDAQTLNILNATYNLLLMSNTSLVDDCWLCLKLGPPTPLAIPNFLLSYVTRSSDNISCLIIPPLLVQPMQFSNSSCLFSPSYNSTEEIDLGHVAFSNCTSITNVTGPICAVNGSVFLCGNNMAYTYLPTNWTGLCVLATLLPDIDIIPGDEPVPIPAIDHFIYRPKRAIQFIPLLAGLGITAAFTTGATGLGVSVTQYTKLSNQLISDVQILSSTIQDLQDQVDSLAEVVLQNRRGLDLLTAEQGGICLALQEKCCFYVNKSGIVRDKIKTLQEELERRRKDLASNPLWTGLQGLLPYLLPFLGPLLTLLLLLTIGPCIFNRLTAFINDKLNIIHAMVLTQQYQVLRTDEEAQD.

The first 18 residues, 1-18 (MGFTTKIIFLYNLVLVYA), serve as a signal peptide directing secretion. Residues 19-503 (GFDDPRKAIE…SNPLWTGLQG (485 aa)) are Extracellular-facing. Residues N113, N219, and N229 are each glycosylated (N-linked (GlcNAc...) asparagine; by host). The CXXC motif lies at 236–239 (CWLC). 3 disulfide bridges follow: C236/C239, C236/C465, and C457/C464. N-linked (GlcNAc...) asparagine; by host glycans are attached at residues N264, N282, N292, N306, N312, N321, and N339. The segment at 380–400 (FIPLLAGLGITAAFTTGATGL) is fusion peptide. Coiled-coil stretches lie at residues 401–451 (GVSV…LLTA) and 461–497 (QEKC…SNPL). The immunosuppression stretch occupies residues 440–456 (LQNRRGLDLLTAEQGGI). Residues 457-465 (CLALQEKCC) carry the CX6CC motif. N469 carries N-linked (GlcNAc...) asparagine; by host glycosylation. Residues 504 to 524 (LLPYLLPFLGPLLTLLLLLTI) form a helical membrane-spanning segment. Topologically, residues 525-563 (GPCIFNRLTAFINDKLNIIHAMVLTQQYQVLRTDEEAQD) are cytoplasmic. Residue C527 is the site of S-palmitoyl cysteine; by host attachment. The short motif at 552-555 (YQVL) is the YXXL motif; contains endocytosis signal element.

As to quaternary structure, the mature envelope protein (Env) consists of a trimer of SU-TM heterodimers attached by a labile interchain disulfide bond. In terms of processing, specific enzymatic cleavages in vivo yield mature proteins. Envelope glycoproteins are synthesized as an inactive precursor that is N-glycosylated and processed likely by host cell furin or by a furin-like protease in the Golgi to yield the mature SU and TM proteins. The cleavage site between SU and TM requires the minimal sequence [KR]-X-[KR]-R. The R-peptide is released from the C-terminus of the cytoplasmic tail of the TM protein upon particle formation as a result of proteolytic cleavage by the viral protease. Cleavage of this peptide is required for TM to become fusogenic. Post-translationally, the CXXC motif is highly conserved across a broad range of retroviral envelope proteins. It is thought to participate in the formation of a labile disulfide bond possibly with the CX6CC motif present in the transmembrane protein. Isomerization of the intersubunit disulfide bond to an SU intrachain disulfide bond is thought to occur upon receptor recognition in order to allow membrane fusion. The transmembrane protein is palmitoylated.

The protein resides in the virion membrane. The protein localises to the host cell membrane. Its function is as follows. The surface protein (SU) attaches the virus to the host cell by binding to its receptor. This interaction triggers the refolding of the transmembrane protein (TM) and is thought to activate its fusogenic potential by unmasking its fusion peptide. Fusion occurs at the host cell plasma membrane. Functionally, the transmembrane protein (TM) acts as a class I viral fusion protein. Under the current model, the protein has at least 3 conformational states: pre-fusion native state, pre-hairpin intermediate state, and post-fusion hairpin state. During viral and target cell membrane fusion, the coiled coil regions (heptad repeats) assume a trimer-of-hairpins structure, positioning the fusion peptide in close proximity to the C-terminal region of the ectodomain. The formation of this structure appears to drive apposition and subsequent fusion of viral and target cell membranes. Membranes fusion leads to delivery of the nucleocapsid into the cytoplasm. In Baboon endogenous virus (strain M7), this protein is Envelope glycoprotein (env).